Here is a 243-residue protein sequence, read N- to C-terminus: Terpene cyclase dpmpB (243 aa).

7 helical membrane passes run 13–33 (FLEVAWLADACKLLMGVGWTA), 51–71 (ALMPLCCNFAWELVYALILPF), 78–98 (WVHVTGLAFNCGVMYTAIKFA), 112–132 (LTWIFIASVAGWMSAHLALAA), 141–161 (AWSAYGCQLLLSVGGLCQLLC), 169–189 (SYLLWFSRFFGSLVLIPQDIL), and 207–227 (LWFVSIFLILDGSYGILLWYV).

Belongs to the paxB family.

The protein localises to the membrane. The protein operates within secondary metabolite biosynthesis; terpenoid biosynthesis. Functionally, terpene cyclase; part of the gene cluster that mediates the biosynthesis of diterpenoid pyrones. The first step of the pathway is the synthesis of the alpha-pyrone moiety by the polyketide synthase dpmpA via condensation of one acetyl-CoA starter unit with 3 malonyl-CoA units and 2 methylations. The alpha-pyrone is then combined with geranylgeranyl pyrophosphate (GGPP) formed by the GGPP synthase dpmpD through the action of the prenyltransferase dpmpC to yield a linear alpha-pyrone diterpenoid. Subsequent steps in the diterpenoid pyrone biosynthetic pathway involve the decalin core formation, which is initiated by the epoxidation of the C10-C11 olefin by the FAD-dependent oxidoreductase dpmpE, and is followed by a cyclization cascade catalyzed by the terpene cyclase dpmpB. The short chain dehydrogenase/reductase dpmpG then oxidizes the 8S hydroxy group to a ketone and the short chain dehydrogenase/reductase dpmpH reduces the ketone to the 8R hydroxy group to yield higginsianin B. Higginsianin B is further methylated by the methyltransferase dpmpI to produce the intermediate named FDDP B. The cytochrome P450 monooxygenase dpmpJ then oxidizes the C-26 methyl to primary alcohol, producing the final diterpenoid pyrone with a C-26 primary alcohol on the gamma-pyrone moiety named FDDP C. The protein is Terpene cyclase dpmpB of Macrophomina phaseolina (strain MS6) (Charcoal rot fungus).